Consider the following 393-residue polypeptide: S-adenosylmethionine synthase (393 aa).

A Mg(2+)-binding site is contributed by E9. H15 contacts ATP. E43 is a K(+) binding site. E56 and Q99 together coordinate L-methionine. Residues D167–K169, S235–F238, D246, R252–K253, A269, K273, and K277 contribute to the ATP site. Residue D246 participates in L-methionine binding. An L-methionine-binding site is contributed by K277.

This sequence belongs to the AdoMet synthase family. Homotetramer. The cofactor is Mn(2+). It depends on Mg(2+) as a cofactor. Co(2+) is required as a cofactor. Requires K(+) as cofactor.

Its subcellular location is the cytoplasm. It carries out the reaction L-methionine + ATP + H2O = S-adenosyl-L-methionine + phosphate + diphosphate. Its pathway is amino-acid biosynthesis; S-adenosyl-L-methionine biosynthesis; S-adenosyl-L-methionine from L-methionine: step 1/1. In terms of biological role, catalyzes the formation of S-adenosylmethionine from methionine and ATP. The reaction comprises two steps that are both catalyzed by the same enzyme: formation of S-adenosylmethionine (AdoMet) and triphosphate, and subsequent hydrolysis of the triphosphate. The chain is S-adenosylmethionine synthase (SAMS) from Gossypium hirsutum (Upland cotton).